The primary structure comprises 158 residues: Oocyte-secreted protein 2 (158 aa).

A signal peptide spans 1–17 (MALEVLMLLAVLIWTGA).

This sequence belongs to the PLAC1 family. As to expression, highly expressed in oocytes.

The protein resides in the secreted. It localises to the cytoplasm. Involved in oocyte maturation. The protein is Oocyte-secreted protein 2 (OOSP2) of Homo sapiens (Human).